The following is a 290-amino-acid chain: Succinate dehydrogenase [ubiquinone] iron-sulfur subunit, mitochondrial (290 aa).

A mitochondrion-targeting transit peptide spans 1–38; that stretch reads MAAAVVGVSLRRGVPARFLRAGLRPVRGLEAVHGICRG. Residues 50-143 form the 2Fe-2S ferredoxin-type domain; the sequence is KKFSIYRWDP…TTKIYPLPHM (94 aa). [2Fe-2S] cluster-binding residues include Cys-103, Cys-108, Cys-111, and Cys-123. A 4Fe-4S ferredoxin-type domain is found at 186–216; that stretch reads DRQKLDGLYECILCACCSTSCPSYWWNGDKY. Cys-196, Cys-199, and Cys-202 together coordinate [4Fe-4S] cluster. Cys-206 is a [3Fe-4S] cluster binding site. Trp-211 contributes to the a ubiquinone binding site. The [3Fe-4S] cluster site is built by Cys-253 and Cys-259. Cys-263 contributes to the [4Fe-4S] cluster binding site.

It belongs to the succinate dehydrogenase/fumarate reductase iron-sulfur protein family. As to quaternary structure, component of complex II composed of four subunits: the flavoprotein (FP) SDHA, iron-sulfur protein (IP) SDHB, and a cytochrome b560 composed of SDHC and SDHD. The cofactor is [2Fe-2S] cluster. It depends on [3Fe-4S] cluster as a cofactor. Requires [4Fe-4S] cluster as cofactor.

It is found in the mitochondrion inner membrane. It carries out the reaction a quinone + succinate = fumarate + a quinol. The enzyme catalyses (R)-malate + a quinone = enol-oxaloacetate + a quinol. It catalyses the reaction (S)-malate + a quinone = enol-oxaloacetate + a quinol. The protein operates within carbohydrate metabolism; tricarboxylic acid cycle; fumarate from succinate (eukaryal route): step 1/1. With respect to regulation, enol-oxaloacetate inhibits the succinate dehydrogenase activity. Functionally, iron-sulfur protein (IP) subunit of the succinate dehydrogenase complex (mitochondrial respiratory chain complex II), responsible for transferring electrons from succinate to ubiquinone (coenzyme Q). SDH also oxidizes malate to the non-canonical enol form of oxaloacetate, enol-oxaloacetate. Enol-oxaloacetate, which is a potent inhibitor of the succinate dehydrogenase activity, is further isomerized into keto-oxaloacetate. The protein is Succinate dehydrogenase [ubiquinone] iron-sulfur subunit, mitochondrial (SDHB) of Gallus gallus (Chicken).